Consider the following 170-residue polypeptide: Microfibrillar-associated protein 5 (170 aa).

A signal peptide spans 1–20; the sequence is MTFFGPKVLLLLTALIMSSG. Residues 30 to 32 carry the Cell attachment site motif; it reads RGD. The N-linked (GlcNAc...) asparagine glycan is linked to N76.

Belongs to the MFAP family. As to quaternary structure, interacts with TGFB2. Interacts with BMP2. Interacts with FBN1 (via N-terminal domain) and FBN2. Post-translationally, forms intermolecular disulfide bonds either with other MAGP-2 molecules or with other components of the microfibrils. As to expression, associated with fibrillin-containing microfibrils of the developing nuchal ligament.

The protein localises to the secreted. The protein resides in the extracellular space. Its subcellular location is the extracellular matrix. Its function is as follows. May play a role in hematopoiesis. In the cardiovascular system, could regulate growth factors or participate in cell signaling in maintaining large vessel integrity. Component of the elastin-associated microfibrils. The polypeptide is Microfibrillar-associated protein 5 (MFAP5) (Bos taurus (Bovine)).